The chain runs to 395 residues: Hdr-like menaquinol oxidoreductase integral membrane subunit (395 aa).

A run of 10 helical transmembrane segments spans residues 15 to 35 (YFALVIILAAVTALGFYAYVL), 57 to 77 (IPYFIGLSAGSLIVSALAGVF), 88 to 108 (IAAYMAAAWIIAAILSIALDI), 126 to 146 (IFSWNAFLYSSYFVICSIYLL), 158 to 178 (FMAGLAVFWAVLVHSGTGAIY), 196 to 216 (FIVCAITSGLGLLLANLYFTF), 231 to 251 (LALIFAGLMMVLGYFLAVEGL), 274 to 294 (VFWSFWLLVIFGIAIPIIIVL), 305 to 325 (ITFAGILHAALVFAERFYLII), and 364 to 384 (IGLIAMVYLIFVVGVKLFALI).

The protein belongs to the NrfD family. As to quaternary structure, consists of five subunits: an integral membrane subunit, a cytochrome b-like subunit, a cytochrome c subunit and two iron-sulfur subunits.

It localises to the cell membrane. Functionally, has menaquinol-oxidizing activity. HmeB subunit may function as a menaquinol-oxidizing site. HmeA, HmeB and HmeE subunits may together catalyze electron transfer from menaquinol to cytochrome c. This Archaeoglobus fulgidus (strain ATCC 49558 / DSM 4304 / JCM 9628 / NBRC 100126 / VC-16) protein is Hdr-like menaquinol oxidoreductase integral membrane subunit (hmeB).